An 833-amino-acid chain; its full sequence is Serine-rich coiled-coil domain-containing protein 2 (833 aa).

The disordered stretch occupies residues 178–208 (NRSSGNVQKPRVNSCASRSSSGESLAQSPDN). Residues 191-208 (SCASRSSSGESLAQSPDN) show a composition bias toward polar residues. Ser222 carries the post-translational modification Phosphoserine. 4 disordered regions span residues 321–345 (LLKS…PADM), 424–452 (NRTR…FDSP), 478–508 (KHTS…SSDG), and 602–631 (DHYH…ESPL). Ser451 carries the post-translational modification Phosphoserine. Over residues 496–506 (SSFELSPSDSS) the composition is skewed to low complexity. The segment covering 606–615 (LSHPGHYHHH) has biased composition (basic residues). Residues 711 to 747 (DQIYKNEDLLNEITQLKEEIKKKDEKIQLLEQQLATR) are a coiled coil. Residues 789–833 (FQGMPRTVPPHRRQTSSTTAFQQPSQIYRPRPGKTNKATTYRGPQ) are disordered. Polar residues predominate over residues 803 to 814 (TSSTTAFQQPSQ).

This sequence belongs to the CCSER family. As to expression, expressed in brain (at protein level).

Its subcellular location is the cytoplasm. The protein localises to the cytoskeleton. In terms of biological role, microtubule-binding protein which might play a role in microtubule bundling. The sequence is that of Serine-rich coiled-coil domain-containing protein 2 (Ccser2) from Mus musculus (Mouse).